A 149-amino-acid chain; its full sequence is UPF0756 membrane protein BBR47_12340 (149 aa).

4 consecutive transmembrane segments (helical) span residues 6–26, 48–68, 86–106, and 120–140; these read IILLVIALLSLVAKDLVLVYA, PMFHVGLFCLMVFLLIPIAKG, IAILAGFIISYVGGKGLSILP, and LLAVLLSNGLPAGLIIAAGCI.

Belongs to the UPF0756 family.

Its subcellular location is the cell membrane. In Brevibacillus brevis (strain 47 / JCM 6285 / NBRC 100599), this protein is UPF0756 membrane protein BBR47_12340.